A 415-amino-acid polypeptide reads, in one-letter code: Serine hydroxymethyltransferase (415 aa).

(6S)-5,6,7,8-tetrahydrofolate-binding positions include Leu-117 and 121 to 123; that span reads GHL. Lys-225 carries the N6-(pyridoxal phosphate)lysine modification. (6S)-5,6,7,8-tetrahydrofolate contacts are provided by residues Glu-241 and 349–351; that span reads SPF.

This sequence belongs to the SHMT family. Homodimer. Requires pyridoxal 5'-phosphate as cofactor.

It localises to the cytoplasm. It carries out the reaction (6R)-5,10-methylene-5,6,7,8-tetrahydrofolate + glycine + H2O = (6S)-5,6,7,8-tetrahydrofolate + L-serine. It functions in the pathway one-carbon metabolism; tetrahydrofolate interconversion. It participates in amino-acid biosynthesis; glycine biosynthesis; glycine from L-serine: step 1/1. Functionally, catalyzes the reversible interconversion of serine and glycine with tetrahydrofolate (THF) serving as the one-carbon carrier. This reaction serves as the major source of one-carbon groups required for the biosynthesis of purines, thymidylate, methionine, and other important biomolecules. Also exhibits THF-independent aldolase activity toward beta-hydroxyamino acids, producing glycine and aldehydes, via a retro-aldol mechanism. The polypeptide is Serine hydroxymethyltransferase (Campylobacter hominis (strain ATCC BAA-381 / DSM 21671 / CCUG 45161 / LMG 19568 / NCTC 13146 / CH001A)).